The sequence spans 276 residues: Ribosomal RNA small subunit methyltransferase A (276 aa).

Residues Asn-19, Leu-21, Gly-46, Glu-71, Asp-94, and Asn-117 each coordinate S-adenosyl-L-methionine.

It belongs to the class I-like SAM-binding methyltransferase superfamily. rRNA adenine N(6)-methyltransferase family. RsmA subfamily.

It localises to the cytoplasm. It catalyses the reaction adenosine(1518)/adenosine(1519) in 16S rRNA + 4 S-adenosyl-L-methionine = N(6)-dimethyladenosine(1518)/N(6)-dimethyladenosine(1519) in 16S rRNA + 4 S-adenosyl-L-homocysteine + 4 H(+). Its function is as follows. Specifically dimethylates two adjacent adenosines (A1518 and A1519) in the loop of a conserved hairpin near the 3'-end of 16S rRNA in the 30S particle. May play a critical role in biogenesis of 30S subunits. The sequence is that of Ribosomal RNA small subunit methyltransferase A from Burkholderia ambifaria (strain ATCC BAA-244 / DSM 16087 / CCUG 44356 / LMG 19182 / AMMD) (Burkholderia cepacia (strain AMMD)).